Reading from the N-terminus, the 625-residue chain is Chaperone protein HtpG (625 aa).

Positions 1 to 339 (MNKQTLSFQA…SSDLPLNVSR (339 aa)) are a; substrate-binding. The b stretch occupies residues 340-557 (ELLQESRDVK…DGDISGHLAR (218 aa)). The c stretch occupies residues 558 to 625 (LLKQAGQSAP…YVQRVNRLLV (68 aa)).

The protein belongs to the heat shock protein 90 family. As to quaternary structure, homodimer.

The protein localises to the cytoplasm. Its function is as follows. Molecular chaperone. Has ATPase activity. In Methylibium petroleiphilum (strain ATCC BAA-1232 / LMG 22953 / PM1), this protein is Chaperone protein HtpG.